The primary structure comprises 243 residues: LexA repressor (243 aa).

Residues 1–30 form a disordered region; the sequence is MSDDTGEFTDGSTESPADADGAGRRRAVDN. Residues 21–30 show a composition bias toward basic and acidic residues; sequence GAGRRRAVDN. Residues 56-76 constitute a DNA-binding region (H-T-H motif); sequence IREIGDAVGLTSTSSVAHQLR. Active-site for autocatalytic cleavage activity residues include S167 and K204.

The protein belongs to the peptidase S24 family. In terms of assembly, homodimer.

It catalyses the reaction Hydrolysis of Ala-|-Gly bond in repressor LexA.. Represses a number of genes involved in the response to DNA damage (SOS response), including recA and lexA. In the presence of single-stranded DNA, RecA interacts with LexA causing an autocatalytic cleavage which disrupts the DNA-binding part of LexA, leading to derepression of the SOS regulon and eventually DNA repair. The protein is LexA repressor of Mycolicibacterium smegmatis (strain ATCC 700084 / mc(2)155) (Mycobacterium smegmatis).